Consider the following 272-residue polypeptide: Probable feruloyl esterase C (272 aa).

A signal peptide spans 1-22 (MVPTIIYSAILALSAFTPSVFA).

Belongs to the faeC family.

Its subcellular location is the secreted. The enzyme catalyses feruloyl-polysaccharide + H2O = ferulate + polysaccharide.. Functionally, involved in degradation of plant cell walls. Hydrolyzes the feruloyl-arabinose ester bond in arabinoxylans, and the feruloyl-galactose ester bond in pectin. Active against paranitrophenyl-acetate, methyl ferulate and wheat arabinoxylan. The chain is Probable feruloyl esterase C (faeC) from Aspergillus fumigatus (strain ATCC MYA-4609 / CBS 101355 / FGSC A1100 / Af293) (Neosartorya fumigata).